The chain runs to 303 residues: UDP-3-O-acyl-N-acetylglucosamine deacetylase (303 aa).

H78, H237, and D241 together coordinate Zn(2+). H264 acts as the Proton donor in catalysis.

The protein belongs to the LpxC family. It depends on Zn(2+) as a cofactor.

The catalysed reaction is a UDP-3-O-[(3R)-3-hydroxyacyl]-N-acetyl-alpha-D-glucosamine + H2O = a UDP-3-O-[(3R)-3-hydroxyacyl]-alpha-D-glucosamine + acetate. The protein operates within glycolipid biosynthesis; lipid IV(A) biosynthesis; lipid IV(A) from (3R)-3-hydroxytetradecanoyl-[acyl-carrier-protein] and UDP-N-acetyl-alpha-D-glucosamine: step 2/6. Its function is as follows. Catalyzes the hydrolysis of UDP-3-O-myristoyl-N-acetylglucosamine to form UDP-3-O-myristoylglucosamine and acetate, the committed step in lipid A biosynthesis. This is UDP-3-O-acyl-N-acetylglucosamine deacetylase from Coxiella burnetii (strain CbuG_Q212) (Coxiella burnetii (strain Q212)).